The sequence spans 618 residues: NAD(P)H-quinone oxidoreductase subunit 5, organellar chromatophore 2 (618 aa).

Helical transmembrane passes span 16–36 (LIPI…TGWI), 43–63 (TPAY…SLAL), 99–119 (LAAL…ALGY), 129–149 (FFAL…SDSL), 152–172 (SYFL…FWYA), 190–210 (GDVM…GMEF), 220–240 (NTLT…GPIG), 267–287 (SVVV…LHHS), 291–311 (IAVL…VSIA), 318–335 (TLSY…IAIA), 348–368 (AHAI…AVSN), 390–410 (LIAG…CFGL), 419–438 (APWF…LNLT), 461–481 (WQMA…PWMM), 495–515 (AITG…GAIV), 553–573 (IVSG…NGFV), and 597–617 (SYIL…SWLV).

This sequence belongs to the complex I subunit 5 family. NDH is composed of at least 16 different subunits, 5 of which are encoded in the nucleus.

Its subcellular location is the plastid. It localises to the organellar chromatophore thylakoid membrane. It catalyses the reaction a plastoquinone + NADH + (n+1) H(+)(in) = a plastoquinol + NAD(+) + n H(+)(out). The enzyme catalyses a plastoquinone + NADPH + (n+1) H(+)(in) = a plastoquinol + NADP(+) + n H(+)(out). NDH shuttles electrons from NAD(P)H:plastoquinone, via FMN and iron-sulfur (Fe-S) centers, to quinones in the photosynthetic chain and possibly in a chloroplast respiratory chain. The immediate electron acceptor for the enzyme in this species is believed to be plastoquinone. Couples the redox reaction to proton translocation, and thus conserves the redox energy in a proton gradient. The chain is NAD(P)H-quinone oxidoreductase subunit 5, organellar chromatophore 2 (ndhF2) from Paulinella chromatophora.